Consider the following 367-residue polypeptide: Isocitrate dehydrogenase [NAD] regulatory subunit 1, mitochondrial (367 aa).

The transit peptide at 1 to 25 directs the protein to the mitochondrion; that stretch reads MSRRSLTLLKNLARNANGSGIQTRS.

This sequence belongs to the isocitrate and isopropylmalate dehydrogenases family. As to quaternary structure, heterooligomer of catalytic and regulatory subunits. Ubiquitous. Predominantly expressed in roots, stems and leaves.

The protein localises to the mitochondrion. Its function is as follows. Performs an essential role in the oxidative function of the citric acid cycle. The chain is Isocitrate dehydrogenase [NAD] regulatory subunit 1, mitochondrial (IDH1) from Arabidopsis thaliana (Mouse-ear cress).